A 274-amino-acid polypeptide reads, in one-letter code: Penicillin-insensitive murein endopeptidase (274 aa).

Positions 1 to 19 are cleaved as a signal peptide; it reads MKKTALALLALLVSSASLA. Intrachain disulfides connect C44/C265, C187/C235, and C216/C223. 6 residues coordinate Zn(2+): H110, H113, D120, D147, H150, and H211. The disordered stretch occupies residues 225-274; it reads DQPLPPPGDGCGAELQSWFEPPEPGTTKPEKKTPPPLPPSCQALLDEHVL.

Belongs to the peptidase M74 family. As to quaternary structure, dimer. It depends on Zn(2+) as a cofactor.

The protein resides in the periplasm. Murein endopeptidase that cleaves the D-alanyl-meso-2,6-diamino-pimelyl amide bond that connects peptidoglycan strands. Likely plays a role in the removal of murein from the sacculus. This chain is Penicillin-insensitive murein endopeptidase, found in Citrobacter koseri (strain ATCC BAA-895 / CDC 4225-83 / SGSC4696).